The primary structure comprises 590 residues: Arginine--tRNA ligase (590 aa).

The 'HIGH' region motif lies at 138-148 (ANPTGPLHIGH).

Belongs to the class-I aminoacyl-tRNA synthetase family. As to quaternary structure, monomer.

The protein resides in the cytoplasm. It carries out the reaction tRNA(Arg) + L-arginine + ATP = L-arginyl-tRNA(Arg) + AMP + diphosphate. The protein is Arginine--tRNA ligase of Orientia tsutsugamushi (strain Ikeda) (Rickettsia tsutsugamushi).